The sequence spans 264 residues: Ribosomal RNA small subunit methyltransferase A (264 aa).

S-adenosyl-L-methionine-binding residues include Asn-12, Leu-14, Gly-39, Glu-60, Asp-83, and Asn-103.

The protein belongs to the class I-like SAM-binding methyltransferase superfamily. rRNA adenine N(6)-methyltransferase family. RsmA subfamily.

It localises to the cytoplasm. It catalyses the reaction adenosine(1518)/adenosine(1519) in 16S rRNA + 4 S-adenosyl-L-methionine = N(6)-dimethyladenosine(1518)/N(6)-dimethyladenosine(1519) in 16S rRNA + 4 S-adenosyl-L-homocysteine + 4 H(+). Functionally, specifically dimethylates two adjacent adenosines (A1518 and A1519) in the loop of a conserved hairpin near the 3'-end of 16S rRNA in the 30S particle. May play a critical role in biogenesis of 30S subunits. This Syntrophotalea carbinolica (strain DSM 2380 / NBRC 103641 / GraBd1) (Pelobacter carbinolicus) protein is Ribosomal RNA small subunit methyltransferase A.